Consider the following 186-residue polypeptide: Probable GPI-anchored cupredoxin ARB_05732-1 (186 aa).

The signal sequence occupies residues 1–18; sequence MVNMNILTTVALAGLAAA. Position 55 (His-55) interacts with Cu cation. Cys-66 and Cys-104 are joined by a disulfide. Asn-87 carries an N-linked (GlcNAc...) asparagine glycan. Cu cation is bound by residues Cys-98 and His-103. The disordered stretch occupies residues 130 to 160; sequence GAGNGQAPSRVNNGSSGSGTPTSGGAPAATS. Asn-142 carries N-linked (GlcNAc...) asparagine glycosylation. Residues 143-160 show a composition bias toward low complexity; that stretch reads GSSGSGTPTSGGAPAATS. Gly-153 carries GPI-anchor amidated glycine lipidation. A propeptide spans 154-186 (removed in mature form); that stretch reads GAPAATSPNAASSLTFSGAAALVAMGGAWIGLL.

Belongs to the multicopper oxidase family. Cu cation is required as a cofactor.

It localises to the cell membrane. Its subcellular location is the secreted. Functionally, probable electron transfer copper protein that serves as a direct electron donor. The protein is Probable GPI-anchored cupredoxin ARB_05732-1 of Arthroderma benhamiae (strain ATCC MYA-4681 / CBS 112371) (Trichophyton mentagrophytes).